A 256-amino-acid chain; its full sequence is Imidazole glycerol phosphate synthase subunit HisF (256 aa).

Residues D12 and D131 contribute to the active site.

This sequence belongs to the HisA/HisF family. As to quaternary structure, heterodimer of HisH and HisF.

The protein localises to the cytoplasm. It catalyses the reaction 5-[(5-phospho-1-deoxy-D-ribulos-1-ylimino)methylamino]-1-(5-phospho-beta-D-ribosyl)imidazole-4-carboxamide + L-glutamine = D-erythro-1-(imidazol-4-yl)glycerol 3-phosphate + 5-amino-1-(5-phospho-beta-D-ribosyl)imidazole-4-carboxamide + L-glutamate + H(+). The protein operates within amino-acid biosynthesis; L-histidine biosynthesis; L-histidine from 5-phospho-alpha-D-ribose 1-diphosphate: step 5/9. Functionally, IGPS catalyzes the conversion of PRFAR and glutamine to IGP, AICAR and glutamate. The HisF subunit catalyzes the cyclization activity that produces IGP and AICAR from PRFAR using the ammonia provided by the HisH subunit. The protein is Imidazole glycerol phosphate synthase subunit HisF of Pseudomonas fluorescens (strain ATCC BAA-477 / NRRL B-23932 / Pf-5).